The sequence spans 119 residues: Small ribosomal subunit protein bS16 (119 aa).

Basic residues predominate over residues 96-107; sequence RKKRRAYRQRRS. The tract at residues 96 to 119 is disordered; that stretch reads RKKRRAYRQRRSTQREEAAKDATK. Residues 108 to 119 are compositionally biased toward basic and acidic residues; sequence TQREEAAKDATK.

This sequence belongs to the bacterial ribosomal protein bS16 family.

The protein is Small ribosomal subunit protein bS16 of Chlamydia pneumoniae (Chlamydophila pneumoniae).